Reading from the N-terminus, the 460-residue chain is Proton extrusion protein PxcA (460 aa).

The disordered stretch occupies residues Arg84–Pro194. The span at Asn114–Phe136 shows a compositional bias: basic and acidic residues. The span at Leu167–Pro194 shows a compositional bias: polar residues. The next 4 helical transmembrane spans lie at Phe242–Phe262, Gly337–Ile357, Ile373–Val393, and Phe420–Ile440.

It belongs to the CemA family.

It localises to the cell inner membrane. In terms of biological role, required for H(+) efflux immediately after light irradiation to form a rapid H(+) concentration gradient across the thylakoid membranes. Together with PxcL, contributes to transient H(+) uptake following dark to light transition. The protein is Proton extrusion protein PxcA of Synechococcus sp. (strain JA-3-3Ab) (Cyanobacteria bacterium Yellowstone A-Prime).